The sequence spans 354 residues: Allantoicase (354 aa).

The protein belongs to the allantoicase family.

It catalyses the reaction allantoate + H2O = (S)-ureidoglycolate + urea. It participates in nitrogen metabolism; (S)-allantoin degradation; (S)-ureidoglycolate from allantoate (aminidohydrolase route): step 1/1. Its function is as follows. Utilization of purines as secondary nitrogen sources, when primary sources are limiting. This is Allantoicase (alc-1) from Neurospora crassa (strain ATCC 24698 / 74-OR23-1A / CBS 708.71 / DSM 1257 / FGSC 987).